Here is a 514-residue protein sequence, read N- to C-terminus: Cytochrome P450 monooxygenase nodJ (514 aa).

A helical transmembrane segment spans residues 2-24 (ELIVIIITLAFCILLYGTRWRAA). Asn144, Asn245, and Asn416 each carry an N-linked (GlcNAc...) asparagine glycan. Cys432 serves as a coordination point for heme.

It belongs to the cytochrome P450 family. It depends on heme as a cofactor.

Its subcellular location is the membrane. Its pathway is secondary metabolite biosynthesis. Cytochrome P450 monooxygenase; part of the gene cluster that mediates the biosynthesis of the indole diterpenes nodulisporic acids (NA). Nodulisporic acid A (NAA) and its chemically modified derivatives are of particular significance because of their highly potent insecticidal activity against blood-feeding arthropods and lack of observable adverse effects on mammals, in particular the tremogenicity associated with the paspaline-derived IDTs is not observed. The geranylgeranyl diphosphate (GGPP) synthase ggs1, localized outside of the cluster, is proposed to catalyze the first step in nodulisporic acid biosynthesis via conversion of farnesyl pyrophosphate and isopentyl pyrophosphate into geranylgeranyl pyrophosphate (GGPP). Condensation of indole-3-glycerol phosphate with GGPP by the prenyl transferase nodC then forms 3-geranylgeranylindole (3-GGI). Epoxidation by the FAD-dependent monooxygenase nodM leads to a single-epoxidized-GGI that is substrate of the terpene cyclase nodB for cyclization to yield emindole SB. The terminal methyl carbon, C28, of emindole SB is then oxidized by the cytochrome P450 monooxygenase nodW to produce nodulisporic acid F (NAF), the pentacyclic core of NAA. NAF is converted to nodulisporic acid E (NAE) via prenylation. This step is probably performed by one of the indole diterpene prenyltransferases nodD1 or nodD2. Several oxidation steps performed by the FAD-linked oxidoreductase nodO and one of the cytochrome P450 monooxygenase nodR, nodX or nodZ further convert NAE to nodulisporic acid D (NAD). NAD is substrate of cytochrome P450 monooxygenase nodJ to produce the precursor of nodulisporic acid C (NAC), converted to NAC by one of the indole diterpene prenyltransferases nodD1 or nodD2. The FAD-dependent monooxygenase nodY2 then oxidizes NAC to nodulisporic acid B (NAB). Finally NAB is converted to NAA by one of the cytochrome P450 monooxygenases nodR, nodX or nodZ. The chain is Cytochrome P450 monooxygenase nodJ from Hypoxylon pulicicidum.